The primary structure comprises 318 residues: MPSYGSLHSPSLRKMEHSRGQYGGGRKGMSLGNVIGDPFALATISIAGLAWLIAFIASIVAQIQTTQGFPTYTWWTVVFYFFLIPGVFVVVASDTIQTYHVALVGYMACGLVLTTSSVNGLVYSTNGAKEAAAAGFILLSMVTIVWIFYFGSAPSAMPRAYLDSFALSKESTSNNRQTMTGGGYGIGRPETSTSVQPPQMYTSAQLNGFENPSPVNGMRNSGAPPSGFPTTPGPASGLPKTTTPPAGGAADAEIVPPTEYPYRAKAIYTYEANPDDANEISFSKHEILEVSDVSGRWWQARKETGETGIAPSNYLILL.

A disordered region spans residues 1 to 23; the sequence is MPSYGSLHSPSLRKMEHSRGQYG. Residues 1 to 38 are Cytoplasmic-facing; that stretch reads MPSYGSLHSPSLRKMEHSRGQYGGGRKGMSLGNVIGDP. Residues 39 to 59 form a helical membrane-spanning segment; sequence FALATISIAGLAWLIAFIASI. At 60–71 the chain is on the extracellular side; the sequence is VAQIQTTQGFPT. The chain crosses the membrane as a helical span at residues 72 to 92; sequence YTWWTVVFYFFLIPGVFVVVA. The Cytoplasmic portion of the chain corresponds to 93-100; it reads SDTIQTYH. The chain crosses the membrane as a helical span at residues 101–121; that stretch reads VALVGYMACGLVLTTSSVNGL. Over 122–130 the chain is Extracellular; it reads VYSTNGAKE. A helical membrane pass occupies residues 131-151; the sequence is AAAAGFILLSMVTIVWIFYFG. Residues 152 to 318 are Cytoplasmic-facing; the sequence is SAPSAMPRAY…IAPSNYLILL (167 aa). Residues 172–255 are disordered; that stretch reads TSNNRQTMTG…AGGAADAEIV (84 aa). The segment covering 190–214 has biased composition (polar residues); the sequence is ETSTSVQPPQMYTSAQLNGFENPSP. Residues 237–250 show a composition bias toward low complexity; that stretch reads GLPKTTTPPAGGAA. The 60-residue stretch at 259 to 318 folds into the SH3 domain; that stretch reads EYPYRAKAIYTYEANPDDANEISFSKHEILEVSDVSGRWWQARKETGETGIAPSNYLILL.

This sequence belongs to the SHO1 family. As to quaternary structure, forms homooligomers.

It is found in the cell membrane. MSB2 and SHO1 have overlapping functions in recognizing various surface signals for MAPK PMK1 activation and appressorium formation. While MSB2 is critical for sensing surface hydrophobicity and cutin monomers, SHO1 may play a more important role in recognizing rice leaf waxes. This Pyricularia oryzae (strain 70-15 / ATCC MYA-4617 / FGSC 8958) (Rice blast fungus) protein is Cell surface sensor SHO1.